Consider the following 307-residue polypeptide: Non-homologous end joining protein Ku (307 aa).

The Ku domain occupies leucine 11–isoleucine 179. 2 stretches are compositionally biased toward low complexity: residues arginine 257–alanine 267 and alanine 290–lysine 307. The interval arginine 257 to lysine 307 is disordered.

The protein belongs to the prokaryotic Ku family. As to quaternary structure, homodimer. Interacts with LigD.

Functionally, with LigD forms a non-homologous end joining (NHEJ) DNA repair enzyme, which repairs dsDNA breaks with reduced fidelity. Binds linear dsDNA with 5'- and 3'- overhangs but not closed circular dsDNA nor ssDNA. Recruits and stimulates the ligase activity of LigD. The protein is Non-homologous end joining protein Ku of Paraburkholderia phymatum (strain DSM 17167 / CIP 108236 / LMG 21445 / STM815) (Burkholderia phymatum).